The primary structure comprises 356 residues: 5-formaminoimidazole-4-carboxamide-1-(beta)-D-ribofuranosyl 5'-monophosphate synthetase (356 aa).

Positions 27 and 94 each coordinate 5-amino-1-(5-phospho-beta-D-ribosyl)imidazole-4-carboxamide. The ATP-grasp domain maps to 101 to 333; the sequence is TENFADMAVP…YADLMEENLS (233 aa). ATP contacts are provided by residues 145-196 and E226; that span reads PHDI…TRYY. Residue N255 coordinates 5-amino-1-(5-phospho-beta-D-ribosyl)imidazole-4-carboxamide. 2 residues coordinate Mg(2+): E293 and E306.

Belongs to the phosphohexose mutase family. Mg(2+) is required as a cofactor. It depends on Mn(2+) as a cofactor.

The enzyme catalyses 5-amino-1-(5-phospho-beta-D-ribosyl)imidazole-4-carboxamide + formate + ATP = 5-formamido-1-(5-phospho-D-ribosyl)imidazole-4-carboxamide + ADP + phosphate. It participates in purine metabolism; IMP biosynthesis via de novo pathway; 5-formamido-1-(5-phospho-D-ribosyl)imidazole-4-carboxamide from 5-amino-1-(5-phospho-D-ribosyl)imidazole-4-carboxamide (formate route): step 1/1. In terms of biological role, catalyzes the ATP- and formate-dependent formylation of 5-aminoimidazole-4-carboxamide-1-beta-d-ribofuranosyl 5'-monophosphate (AICAR) to 5-formaminoimidazole-4-carboxamide-1-beta-d-ribofuranosyl 5'-monophosphate (FAICAR) in the absence of folates. In Methanosarcina barkeri (strain Fusaro / DSM 804), this protein is 5-formaminoimidazole-4-carboxamide-1-(beta)-D-ribofuranosyl 5'-monophosphate synthetase.